A 523-amino-acid chain; its full sequence is MAGSTSASLQTPYFPSSTQINPVRVDHTLPLPPAQPSLSFTQGLLVGQLSVVLLIGAFIKFFIFGEAPPPPSRGLSNRTSTHPRSYSINAASTDSSPRLLREKPSTSNILRPVPSSSTNTRSILRKTYYSATPTHPTPKHGRPRLYHSSHQPESLDWFNVLIAQTIAQYRQTAYILKDSPTSSILASLSETLNNPEKKPSFIDIIKVTDISLGEEFPIFSNCRVIAVEDPNSDGGRLQALMDVDLSDDNLSLAIETSLLLNYPKPFSAILPVALAVSVVRFSGTLCISFVPGPRTSDQTMSPIPTPHDTTSEAIDDQSSDQSSPAQNPDGPKDAHANTSNTTDASSKHGIPKTSLAFSFLPDYRLDLSVRSLIGSRSRLQDVPKVAQLVEARVQSWFEERVVEPRVQVVGLPNIWPRMGRTGLRSSQEEPEAGSGSVEIPVMTSPGTDGVSGGGGSGGGSGGGGGSMRGIDRGLSGREVGYEALRFRHAACGGHQNQSGRDGGRGGNEQFAMPGSMPDTVTET.

Topologically, residues 1–43 are lumenal; it reads MAGSTSASLQTPYFPSSTQINPVRVDHTLPLPPAQPSLSFTQG. The helical transmembrane segment at 44-64 threads the bilayer; sequence LLVGQLSVVLLIGAFIKFFIF. Residues 65 to 523 lie on the Cytoplasmic side of the membrane; sequence GEAPPPPSRG…GSMPDTVTET (459 aa). Disordered regions lie at residues 70–118, 295–349, 420–473, and 492–523; these read PPSR…SSST, TSDQ…SKHG, RTGL…IDRG, and GGHQNQSGRDGGRGGNEQFAMPGSMPDTVTET. 3 stretches are compositionally biased toward polar residues: residues 74–96, 105–118, and 295–312; these read GLSNRTSTHPRSYSINAASTDSS, STSNILRPVPSSST, and TSDQTMSPIPTPHDTTSE. Positions 151-412 constitute an SMP-LTD domain; the sequence is QPESLDWFNV…EPRVQVVGLP (262 aa). The segment covering 449–467 has biased composition (gly residues); the sequence is GVSGGGGSGGGSGGGGGSM.

The protein belongs to the MMM1 family. As to quaternary structure, homodimer. Component of the ER-mitochondria encounter structure (ERMES) or MDM complex, composed of MMM1, MDM10, MDM12 and MDM34. An MMM1 homodimer associates with one molecule of MDM12 on each side in a pairwise head-to-tail manner, and the SMP-LTD domains of MMM1 and MDM12 generate a continuous hydrophobic tunnel for phospholipid trafficking.

Its subcellular location is the endoplasmic reticulum membrane. Component of the ERMES/MDM complex, which serves as a molecular tether to connect the endoplasmic reticulum (ER) and mitochondria. Components of this complex are involved in the control of mitochondrial shape and protein biogenesis, and function in nonvesicular lipid trafficking between the ER and mitochondria. The MDM12-MMM1 subcomplex functions in the major beta-barrel assembly pathway that is responsible for biogenesis of all outer membrane beta-barrel proteins, and acts in a late step after the SAM complex. The MDM10-MDM12-MMM1 subcomplex further acts in the TOM40-specific pathway after the action of the MDM12-MMM1 complex. Essential for establishing and maintaining the structure of mitochondria and maintenance of mtDNA nucleoids. The protein is Maintenance of mitochondrial morphology protein 1 of Paracoccidioides brasiliensis (strain Pb03).